A 213-amino-acid polypeptide reads, in one-letter code: Large ribosomal subunit protein uL3 (213 aa).

The segment at 122–147 (AIKRHGQSRGPMAHGSRYHRRPGSMG) is disordered.

It belongs to the universal ribosomal protein uL3 family. In terms of assembly, part of the 50S ribosomal subunit. Forms a cluster with proteins L14 and L19.

Functionally, one of the primary rRNA binding proteins, it binds directly near the 3'-end of the 23S rRNA, where it nucleates assembly of the 50S subunit. This is Large ribosomal subunit protein uL3 from Geobacillus stearothermophilus (Bacillus stearothermophilus).